Consider the following 576-residue polypeptide: MAGUK p55 subfamily member 7 (576 aa).

L27 domains lie at 10–64 (CDMG…EKQN) and 65–122 (PLPI…YDPV). A PDZ domain is found at 139-220 (IIRLVKNSEP…AITFKIIPST (82 aa)). Residues 228–298 (EGKIFIKALF…PSKHFQERRL (71 aa)) enclose the SH3 domain. The tract at residues 289 to 383 (PSKHFQERRL…VGPVGVGLNE (95 aa)) is phospho-regulated basic and hydrophobic (PRBH) motif. Positions 368-560 (YRLIVLVGPV…AFNELKTTFD (193 aa)) constitute a Guanylate kinase-like domain. Ser-409 carries the phosphoserine modification.

This sequence belongs to the MAGUK family. As to quaternary structure, heterodimer; able to heterodimerize via its C-terminal L27 domain with LIN7A, LIN7B and LIN7C. Forms a tripartite complex composed of DLG1, MPP7 and LIN7 (LIN7A or LIN7C). Interacts with DLG1 via its N-terminal L27 domain. Interacts with PALS1 and PATJ. Post-translationally, phosphorylated by aPKC which promotes dissociation from the cell cortex.

Its subcellular location is the membrane. The protein localises to the lateral cell membrane. It is found in the cell junction. It localises to the tight junction. The protein resides in the adherens junction. Its subcellular location is the cytoplasm. The protein localises to the cell cortex. Acts as an important adapter that promotes epithelial cell polarity and tight junction formation via its interaction with DLG1. Involved in the assembly of protein complexes at sites of cell-cell contact. In Mus musculus (Mouse), this protein is MAGUK p55 subfamily member 7 (Mpp7).